Consider the following 981-residue polypeptide: Amidohydrolase tasK (981 aa).

The interval 1–36 (MDDQKGPLPPYTPTATAPPPASMRQRRPPGRRRALR) is disordered. A compositionally biased stretch (pro residues) spans 7–21 (PLPPYTPTATAPPPA). Over residues 24–36 (RQRRPPGRRRALR) the composition is skewed to basic residues. A helical membrane pass occupies residues 40–57 (TVRVLALACLAFVVLAQW). The disordered stretch occupies residues 86 to 107 (LRVRPQDPAGPGRSKNDRYLDG). Residues His187 and His189 each coordinate Fe(2+). The Zn(2+) site is built by His187 and His189. Asn407 is a glycosylation site (N-linked (GlcNAc...) asparagine). The disordered stretch occupies residues 819-838 (KKQQKQQQQQQQQQQQQHGT). A compositionally biased stretch (low complexity) spans 823–835 (KQQQQQQQQQQQQ). The N-linked (GlcNAc...) asparagine glycan is linked to Asn891.

This sequence belongs to the metallo-dependent hydrolases superfamily. Requires Fe(2+) as cofactor. Mn(2+) serves as cofactor. Zn(2+) is required as a cofactor.

Its subcellular location is the membrane. Amidohydrolase; part of the gene cluster that mediates the biosynthesis of the tetramic acids Sch210971 and Sch210972, potential anti-HIV fungal natural product that contain a decalin core. The PKS module of tasS together with the enoylreductase tasC catalyze the formation of the polyketide unit which is then conjugated to 4-hydroxyl-4-methyl glutamate (HMG) by the condensation domain of the tasS NRPS module. One unique structural feature of Sch210971 and Sch210972 is the tetramic acid motif proposed to be derived from the non-proteinogenic amino acid HMG, by a Dieckmann-type condensation catalyzed by the reductase domain of tasS. The aldolase tasA catalyzes the aldol condensation of 2 molecules of pyruvic acid to yield the intermediate 4-hydroxyl-4-methyl-2-oxoglutarate (HMOG), which can then be stereoselectively transaminated, may be by tasG, to form HMG. The Diels-Alderase tas3 then uses the Dieckmann product of tasS as substrate and catalyzes the Diels-Alder cycloaddition to form the decalin ring of Sch210971 and Sch210972. In Hapsidospora irregularis, this protein is Amidohydrolase tasK.